The following is a 116-amino-acid chain: Aspartate 1-decarboxylase (116 aa).

Residue Ser-25 is the Schiff-base intermediate with substrate; via pyruvic acid of the active site. Ser-25 is subject to Pyruvic acid (Ser). Thr-57 contributes to the substrate binding site. Tyr-58 (proton donor) is an active-site residue. Position 73–75 (73–75 (GAA)) interacts with substrate.

The protein belongs to the PanD family. In terms of assembly, heterooctamer of four alpha and four beta subunits. It depends on pyruvate as a cofactor. Is synthesized initially as an inactive proenzyme, which is activated by self-cleavage at a specific serine bond to produce a beta-subunit with a hydroxyl group at its C-terminus and an alpha-subunit with a pyruvoyl group at its N-terminus.

The protein localises to the cytoplasm. The enzyme catalyses L-aspartate + H(+) = beta-alanine + CO2. It participates in cofactor biosynthesis; (R)-pantothenate biosynthesis; beta-alanine from L-aspartate: step 1/1. Catalyzes the pyruvoyl-dependent decarboxylation of aspartate to produce beta-alanine. The polypeptide is Aspartate 1-decarboxylase (Fervidobacterium nodosum (strain ATCC 35602 / DSM 5306 / Rt17-B1)).